The sequence spans 79 residues: D-alanyl carrier protein (79 aa).

Residues 1-77 (MDVKETILNI…KIISGVVELM (77 aa)) form the Carrier domain. S35 is subject to O-(pantetheine 4'-phosphoryl)serine.

The protein belongs to the DltC family. Post-translationally, 4'-phosphopantetheine is transferred from CoA to a specific serine of apo-DCP.

Its subcellular location is the cytoplasm. Its pathway is cell wall biogenesis; lipoteichoic acid biosynthesis. Carrier protein involved in the D-alanylation of lipoteichoic acid (LTA). The loading of thioester-linked D-alanine onto DltC is catalyzed by D-alanine--D-alanyl carrier protein ligase DltA. The DltC-carried D-alanyl group is further transferred to cell membrane phosphatidylglycerol (PG) by forming an ester bond, probably catalyzed by DltD. D-alanylation of LTA plays an important role in modulating the properties of the cell wall in Gram-positive bacteria, influencing the net charge of the cell wall. The chain is D-alanyl carrier protein from Streptococcus suis (strain 98HAH33).